Consider the following 350-residue polypeptide: Phosphotriesterase-related protein (350 aa).

A divalent metal cation is bound by residues His22, His24, Glu169, His201, His230, and Asp298.

This sequence belongs to the metallo-dependent hydrolases superfamily. Phosphotriesterase family. A divalent metal cation serves as cofactor.

In Drosophila willistoni (Fruit fly), this protein is Phosphotriesterase-related protein.